We begin with the raw amino-acid sequence, 337 residues long: DNA-directed RNA polymerase subunit alpha (337 aa).

The alpha N-terminal domain (alpha-NTD) stretch occupies residues 1-233; that stretch reads MVREEVAGST…DLFLPFLHTE (233 aa). Residues 267–337 are alpha C-terminal domain (alpha-CTD); the sequence is IPLNCIFIDQ…LPMDLPKNKF (71 aa).

The protein belongs to the RNA polymerase alpha chain family. In terms of assembly, in plastids the minimal PEP RNA polymerase catalytic core is composed of four subunits: alpha, beta, beta', and beta''. When a (nuclear-encoded) sigma factor is associated with the core the holoenzyme is formed, which can initiate transcription.

The protein localises to the plastid. Its subcellular location is the chloroplast. It catalyses the reaction RNA(n) + a ribonucleoside 5'-triphosphate = RNA(n+1) + diphosphate. Functionally, DNA-dependent RNA polymerase catalyzes the transcription of DNA into RNA using the four ribonucleoside triphosphates as substrates. This Oryza nivara (Indian wild rice) protein is DNA-directed RNA polymerase subunit alpha.